Here is a 247-residue protein sequence, read N- to C-terminus: Triosephosphate isomerase (247 aa).

Substrate contacts are provided by asparagine 10 and lysine 12. Histidine 94 (electrophile) is an active-site residue. The active-site Proton acceptor is the glutamate 164.

The protein belongs to the triosephosphate isomerase family. In terms of assembly, homodimer.

It catalyses the reaction D-glyceraldehyde 3-phosphate = dihydroxyacetone phosphate. It functions in the pathway carbohydrate biosynthesis; gluconeogenesis. It participates in carbohydrate degradation; glycolysis; D-glyceraldehyde 3-phosphate from glycerone phosphate: step 1/1. The sequence is that of Triosephosphate isomerase (Tpi) from Drosophila simulans (Fruit fly).